We begin with the raw amino-acid sequence, 209 residues long: Large ribosomal subunit protein uL3 (209 aa).

A compositionally biased stretch (polar residues) spans 112–122; the sequence is GTTRGHGTQGN. The tract at residues 112–146 is disordered; it reads GTTRGHGTQGNIKRWGQSRGPETHGSRYHRIPGSM.

Belongs to the universal ribosomal protein uL3 family. As to quaternary structure, part of the 50S ribosomal subunit. Forms a cluster with proteins L14 and L19.

Its function is as follows. One of the primary rRNA binding proteins, it binds directly near the 3'-end of the 23S rRNA, where it nucleates assembly of the 50S subunit. The chain is Large ribosomal subunit protein uL3 from Lactobacillus johnsonii (strain CNCM I-12250 / La1 / NCC 533).